Consider the following 118-residue polypeptide: Large ribosomal subunit protein bL20 (118 aa).

Belongs to the bacterial ribosomal protein bL20 family.

In terms of biological role, binds directly to 23S ribosomal RNA and is necessary for the in vitro assembly process of the 50S ribosomal subunit. It is not involved in the protein synthesizing functions of that subunit. The polypeptide is Large ribosomal subunit protein bL20 (Francisella philomiragia subsp. philomiragia (strain ATCC 25017 / CCUG 19701 / FSC 153 / O#319-036)).